Reading from the N-terminus, the 374-residue chain is SKP1-interacting partner 15 (374 aa).

An F-box domain is found at 3 to 48 (SSPVNCLPPDSLHQIFSSLPIRDIMICRSVCKFFNQLLTSQCFIEI).

Part of a SCF (ASK-cullin-F-box) protein ligase complex. Interacts with SKP1A/ASK1, SKP1B/ASK2, ASK11 and ASK13.

It localises to the nucleus. The protein operates within protein modification; protein ubiquitination. Functionally, component of SCF(ASK-cullin-F-box) E3 ubiquitin ligase complexes, which may mediate the ubiquitination and subsequent proteasomal degradation of target proteins. This chain is SKP1-interacting partner 15 (SKIP15), found in Arabidopsis thaliana (Mouse-ear cress).